Reading from the N-terminus, the 367-residue chain is Peptide chain release factor 2 (367 aa).

Gln254 is modified (N5-methylglutamine).

Belongs to the prokaryotic/mitochondrial release factor family. In terms of processing, methylated by PrmC. Methylation increases the termination efficiency of RF2.

The protein resides in the cytoplasm. Its function is as follows. Peptide chain release factor 2 directs the termination of translation in response to the peptide chain termination codons UGA and UAA. This chain is Peptide chain release factor 2, found in Leptospira interrogans serogroup Icterohaemorrhagiae serovar Lai (strain 56601).